The sequence spans 430 residues: Palmitoyltransferase ZDHHC11 (430 aa).

At 1-46 the chain is on the cytoplasmic side; that stretch reads MTNLNCFGRHRRRTAPHNATGSRSELVAPPIHSRINGWSSPLHSFQ. Residues 47 to 67 traverse the membrane as a helical segment; that stretch reads FIALLIFSFMAIVAFGIYVPL. Over 68 to 76 the chain is Lumenal; that stretch reads LPAPWSYAA. Residues 77-97 traverse the membrane as a helical segment; that stretch reads YALIGSAFVLHLFSHVTAVTI. Topologically, residues 98–176 are cytoplasmic; sequence DPADVNVRRR…GGRNYWFFFT (79 aa). In terms of domain architecture, DHHC spans 129-179; that stretch reads LHCTLCEVDVSPKAKHCSTCNKCIADFDHHCKWLNNCVGGRNYWFFFTAVS. The S-palmitoyl cysteine intermediate role is filled by C159. Residues 177 to 197 traverse the membrane as a helical segment; sequence AVSSAVIGVILLIPLVLFVFI. The Lumenal segment spans residues 198-234; the sequence is EHYVNPAVLRTAPQFQTVKGNGTWLVFLPVAPVETSS. Residues 235-255 form a helical membrane-spanning segment; sequence ISLLVVSFITALLSLAALLLL. Residues 256-430 lie on the Cytoplasmic side of the membrane; that stretch reads CHLLCFHIYL…QYLHFKQKMP (175 aa).

This sequence belongs to the DHHC palmitoyltransferase family.

The protein resides in the endoplasmic reticulum membrane. It catalyses the reaction L-cysteinyl-[protein] + hexadecanoyl-CoA = S-hexadecanoyl-L-cysteinyl-[protein] + CoA. Endoplasmic reticulum-localized palmitoyltransferase that could catalyze the addition of palmitate onto protein substrates. In Danio rerio (Zebrafish), this protein is Palmitoyltransferase ZDHHC11.